A 160-amino-acid chain; its full sequence is Major strawberry allergen Fra a 1-B (160 aa).

Belongs to the BetVI family. Monomer.

In Fragaria ananassa (Strawberry), this protein is Major strawberry allergen Fra a 1-B.